A 319-amino-acid chain; its full sequence is Beta-ketoacyl-[acyl-carrier-protein] synthase III (319 aa).

Active-site residues include Cys-115 and His-246. Positions 247–251 (QANLR) are ACP-binding. Asn-276 is an active-site residue.

It belongs to the thiolase-like superfamily. FabH family. In terms of assembly, homodimer.

It is found in the cytoplasm. It catalyses the reaction malonyl-[ACP] + acetyl-CoA + H(+) = 3-oxobutanoyl-[ACP] + CO2 + CoA. Its pathway is lipid metabolism; fatty acid biosynthesis. Its function is as follows. Catalyzes the condensation reaction of fatty acid synthesis by the addition to an acyl acceptor of two carbons from malonyl-ACP. Catalyzes the first condensation reaction which initiates fatty acid synthesis and may therefore play a role in governing the total rate of fatty acid production. Possesses both acetoacetyl-ACP synthase and acetyl transacylase activities. Its substrate specificity determines the biosynthesis of branched-chain and/or straight-chain of fatty acids. In Coxiella burnetii (strain RSA 493 / Nine Mile phase I), this protein is Beta-ketoacyl-[acyl-carrier-protein] synthase III.